Consider the following 119-residue polypeptide: DNA-binding protein inhibitor ID-3 (119 aa).

One can recognise a bHLH domain in the interval 28-80; that stretch reads RGKSPSAEEPLSLLDDMNHCYSRLRELVPGVPRGTQLSQVEILQRVIDYILDL.

In terms of assembly, homodimer, and heterodimer with other HLH proteins. Interacts with COPS5 and COPS7A. Interacts with IFI204. Interacts with GATA4 and NKX2-5. Interacts with ANKRD2; both proteins cooperate in myoblast differentiation. Interacts with CLOCK and BMAL1. Post-translationally, phosphorylated in vitro by CDC2 and PKC.

The protein localises to the nucleus. Its function is as follows. Transcriptional regulator (lacking a basic DNA binding domain) which negatively regulates the basic helix-loop-helix (bHLH) transcription factors by forming heterodimers and inhibiting their DNA binding and transcriptional activity. Implicated in regulating a variety of cellular processes, including cellular growth, senescence, differentiation, apoptosis, angiogenesis, and neoplastic transformation. Involved in myogenesis by inhibiting skeletal muscle and cardiac myocyte differentiation and promoting muscle precursor cells proliferation. Inhibits the binding of E2A-containing protein complexes to muscle creatine kinase E-box enhancer. Regulates the circadian clock by repressing the transcriptional activator activity of the CLOCK-BMAL1 heterodimer. This chain is DNA-binding protein inhibitor ID-3 (Id3), found in Rattus norvegicus (Rat).